The sequence spans 406 residues: Betaine--homocysteine S-methyltransferase 1 (406 aa).

The region spanning Lys-11–Leu-314 is the Hcy-binding domain. N6-succinyllysine is present on residues Lys-40, Lys-93, and Lys-98. Cys-217 contributes to the Zn(2+) binding site. N6-succinyllysine occurs at positions 232 and 241. Positions 299 and 300 each coordinate Zn(2+). The residue at position 330 (Ser-330) is a Phosphoserine. Lys-340 and Lys-377 each carry N6-succinyllysine.

In terms of assembly, homotetramer. The cofactor is Zn(2+).

The protein localises to the cytoplasm. The protein resides in the cytosol. Its subcellular location is the nucleus. It catalyses the reaction L-homocysteine + glycine betaine = N,N-dimethylglycine + L-methionine. It functions in the pathway amine and polyamine degradation; betaine degradation; sarcosine from betaine: step 1/2. Its pathway is amino-acid biosynthesis; L-methionine biosynthesis via de novo pathway; L-methionine from L-homocysteine (BhmT route): step 1/1. In terms of biological role, involved in the regulation of homocysteine metabolism. Converts betaine and homocysteine to dimethylglycine and methionine, respectively. This reaction is also required for the irreversible oxidation of choline. This Pongo abelii (Sumatran orangutan) protein is Betaine--homocysteine S-methyltransferase 1 (BHMT).